A 206-amino-acid chain; its full sequence is Transmembrane emp24 domain-containing protein bai (206 aa).

Residues 1–20 (MLKSLLCILLIFGCLCRIHG) form the signal peptide. Residues 21–172 (VMFHLTPNTQ…RDTNEKTNSR (152 aa)) are Lumenal-facing. A GOLD domain is found at 30-140 (QKCLKEDIQA…LKPLEVDLKR (111 aa)). Residues 173–193 (VLFFSIFSMCCLLGLATWQVL) form a helical membrane-spanning segment. The Cytoplasmic portion of the chain corresponds to 194 to 206 (YLRRYFKAKKLIE).

This sequence belongs to the EMP24/GP25L family.

The protein localises to the membrane. In terms of biological role, eca and bai are essential, though not redundant, for dorsoventral patterning of the embryo. Specifically required during early embryogenesis for the activity of maternal tkv, while the zygotic tkv is not affected. The polypeptide is Transmembrane emp24 domain-containing protein bai (Drosophila grimshawi (Hawaiian fruit fly)).